The sequence spans 82 residues: T-complex protein 1 subunit gamma (82 aa).

Gly-15 lines the ADP pocket. An ATP-binding site is contributed by Gly-15. Asp-66 serves as a coordination point for Mg(2+). Gly-67, Thr-68, Thr-69, and Ser-70 together coordinate ADP. Gly-67, Thr-68, and Thr-69 together coordinate ATP.

It belongs to the TCP-1 chaperonin family. Component of the chaperonin-containing T-complex (TRiC), a hexadecamer composed of two identical back-to-back stacked rings enclosing a protein folding chamber. Each ring is made up of eight different subunits: TCP1/CCT1, CCT2, CCT3, CCT4, CCT5, CCT6A/CCT6, CCT7, CCT8. Interacts with PACRG. Interacts with DNAAF4. Interacts with DLEC1.

The protein localises to the cytoplasm. The catalysed reaction is ATP + H2O = ADP + phosphate + H(+). In terms of biological role, component of the chaperonin-containing T-complex (TRiC), a molecular chaperone complex that assists the folding of actin, tubulin and other proteins upon ATP hydrolysis. The TRiC complex mediates the folding of WRAP53/TCAB1, thereby regulating telomere maintenance. As part of the TRiC complex may play a role in the assembly of BBSome, a complex involved in ciliogenesis regulating transports vesicles to the cilia. This Sus scrofa (Pig) protein is T-complex protein 1 subunit gamma (CCT3).